A 511-amino-acid chain; its full sequence is Bifunctional purine biosynthesis protein PurH (511 aa).

Residues 1–146 (MGRLALISVT…KNFAHLTVIS (146 aa)) form the MGS-like domain.

It belongs to the PurH family.

It catalyses the reaction (6R)-10-formyltetrahydrofolate + 5-amino-1-(5-phospho-beta-D-ribosyl)imidazole-4-carboxamide = 5-formamido-1-(5-phospho-D-ribosyl)imidazole-4-carboxamide + (6S)-5,6,7,8-tetrahydrofolate. The enzyme catalyses IMP + H2O = 5-formamido-1-(5-phospho-D-ribosyl)imidazole-4-carboxamide. The protein operates within purine metabolism; IMP biosynthesis via de novo pathway; 5-formamido-1-(5-phospho-D-ribosyl)imidazole-4-carboxamide from 5-amino-1-(5-phospho-D-ribosyl)imidazole-4-carboxamide (10-formyl THF route): step 1/1. It participates in purine metabolism; IMP biosynthesis via de novo pathway; IMP from 5-formamido-1-(5-phospho-D-ribosyl)imidazole-4-carboxamide: step 1/1. The sequence is that of Bifunctional purine biosynthesis protein PurH from Microcystis aeruginosa (strain NIES-843 / IAM M-2473).